The sequence spans 303 residues: Probable porphobilinogen deaminase (303 aa).

Residue C233 is modified to S-(dipyrrolylmethanemethyl)cysteine.

The protein belongs to the HMBS family. Dipyrromethane serves as cofactor.

The catalysed reaction is 4 porphobilinogen + H2O = hydroxymethylbilane + 4 NH4(+). It functions in the pathway porphyrin-containing compound metabolism; protoporphyrin-IX biosynthesis; coproporphyrinogen-III from 5-aminolevulinate: step 2/4. In terms of biological role, tetrapolymerization of the monopyrrole PBG into the hydroxymethylbilane pre-uroporphyrinogen in several discrete steps. The polypeptide is Probable porphobilinogen deaminase (Methanocella arvoryzae (strain DSM 22066 / NBRC 105507 / MRE50)).